A 571-amino-acid chain; its full sequence is Hemagglutinin-neuraminidase (571 aa).

Topologically, residues 1 to 26 (MDRAVGRVALENEEREAKNTWRFVFR) are intravirion. Residues 27-47 (IAIFLLIVITLAISAAALVYS) traverse the membrane as a helical segment. Residues 48-571 (MEASTPGDLV…LVEILKEDGV (524 aa)) are Virion surface-facing. N119 carries N-linked (GlcNAc...) asparagine; by host glycosylation. Positions 124–152 (GAPVHDPDYIGGIGKELIVDDASDVTSFY) are important for interaction with fusion/F protein. Intrachain disulfides connect C172-C196, C186-C247, and C238-C251. An involved in neuraminidase activity region spans residues 234–239 (NRKSCS). N-linked (GlcNAc...) asparagine; by host glycosylation is found at N341 and N433. 2 disulfide bridges follow: C344/C461 and C455/C465. 3 N-linked (GlcNAc...) asparagine; by host glycosylation sites follow: N481, N508, and N538. Cysteines 531 and 542 form a disulfide.

It belongs to the paramyxoviruses hemagglutinin-neuraminidase family. Homotetramer; composed of disulfide-linked homodimers. Interacts with F protein trimer. Interacts with host CG-1B; this interaction inhibits viral adsorption and replication rather than internalization.

It localises to the virion membrane. It is found in the host cell membrane. It carries out the reaction Hydrolysis of alpha-(2-&gt;3)-, alpha-(2-&gt;6)-, alpha-(2-&gt;8)- glycosidic linkages of terminal sialic acid residues in oligosaccharides, glycoproteins, glycolipids, colominic acid and synthetic substrates.. Mediates the viral entry into the host cell together with fusion/F protein. Attaches the virus to sialic acid-containing cell receptors and thereby initiates infection. Binding of HN protein to the receptor induces a conformational change that allows the F protein to trigger virion/cell membranes fusion. Its function is as follows. Neuraminidase activity ensures the efficient spread of the virus by dissociating the mature virions from the neuraminic acid containing glycoproteins. This Gallus gallus (Chicken) protein is Hemagglutinin-neuraminidase (HN).